Consider the following 152-residue polypeptide: UPF0178 protein CKL_3490 (152 aa).

It belongs to the UPF0178 family.

This is UPF0178 protein CKL_3490 from Clostridium kluyveri (strain ATCC 8527 / DSM 555 / NBRC 12016 / NCIMB 10680 / K1).